We begin with the raw amino-acid sequence, 421 residues long: Serine--tRNA ligase (421 aa).

225 to 227 lines the L-serine pocket; that stretch reads TAE. Residues 256–258 and V272 contribute to the ATP site; that span reads RSE. E279 provides a ligand contact to L-serine. ATP is bound at residue 345–348; sequence ETHS. Position 380 (T380) interacts with L-serine.

The protein belongs to the class-II aminoacyl-tRNA synthetase family. Type-1 seryl-tRNA synthetase subfamily. In terms of assembly, homodimer. A single tRNA molecule binds across the dimer.

It localises to the cytoplasm. The enzyme catalyses tRNA(Ser) + L-serine + ATP = L-seryl-tRNA(Ser) + AMP + diphosphate + H(+). It catalyses the reaction tRNA(Sec) + L-serine + ATP = L-seryl-tRNA(Sec) + AMP + diphosphate + H(+). The protein operates within aminoacyl-tRNA biosynthesis; selenocysteinyl-tRNA(Sec) biosynthesis; L-seryl-tRNA(Sec) from L-serine and tRNA(Sec): step 1/1. Functionally, catalyzes the attachment of serine to tRNA(Ser). Is also probably able to aminoacylate tRNA(Sec) with serine, to form the misacylated tRNA L-seryl-tRNA(Sec), which will be further converted into selenocysteinyl-tRNA(Sec). This is Serine--tRNA ligase (serS) from Thermus thermophilus (strain ATCC BAA-163 / DSM 7039 / HB27).